The sequence spans 127 residues: Large ribosomal subunit protein bL17 (127 aa).

Belongs to the bacterial ribosomal protein bL17 family. Part of the 50S ribosomal subunit. Contacts protein L32.

The polypeptide is Large ribosomal subunit protein bL17 (Stenotrophomonas maltophilia (strain R551-3)).